Consider the following 242-residue polypeptide: Myogenic factor 6 (242 aa).

Residues 30 to 63 (GSPLYPGSDGTLSPCQDQLPPEAGSDSSGEEHVL) form a disordered region. The region spanning 93–144 (DRRKAATLRERRRLKKINEAFEALKRRTVANPNQRLPKVEILRSAISYIERL) is the bHLH domain. A disordered region spans residues 190–210 (ASDHSRALGGSPKAGGSMVES).

In terms of assembly, efficient DNA binding requires dimerization with another bHLH protein. As to expression, skeletal muscle.

The protein resides in the nucleus. Involved in muscle differentiation (myogenic factor). Induces fibroblasts to differentiate into myoblasts. Probable sequence specific DNA-binding protein. This chain is Myogenic factor 6 (MYF6), found in Gallus gallus (Chicken).